The following is a 100-amino-acid chain: MTFFLKRKISFFLSGIAQTFLFLPILLNRSVIHVVFLTVVLGHRIPWDSVIRCNNTGTTHSAVSSRTELLLPIGGVINNWKRRAWNGFSIQWIWRYSFVY.

This is an uncharacterized protein from Saccharomyces cerevisiae (strain ATCC 204508 / S288c) (Baker's yeast).